Here is a 173-residue protein sequence, read N- to C-terminus: Large ribosomal subunit protein uL18 (173 aa).

The protein belongs to the universal ribosomal protein uL18 family. Part of the 50S ribosomal subunit. Contacts the 5S and 23S rRNAs.

In terms of biological role, this is one of the proteins that bind and probably mediate the attachment of the 5S RNA into the large ribosomal subunit, where it forms part of the central protuberance. The sequence is that of Large ribosomal subunit protein uL18 from Methanococcoides burtonii (strain DSM 6242 / NBRC 107633 / OCM 468 / ACE-M).